A 217-amino-acid polypeptide reads, in one-letter code: Adenylate kinase (217 aa).

10 to 15 contacts ATP; the sequence is GAGKGT. Residues 30–59 are NMP; it reads STGDMLRAQIKAGTELGMKAKAIMDAGGLV. Residues Thr31, Arg36, 57 to 59, 85 to 88, and Gln92 contribute to the AMP site; these read GLV and GFPR. Residues 122-159 are LID; that stretch reads GRRVHVASGRTYHVVFNPPKVAGKDDVTGEDLIQRDDD. ATP is bound by residues Arg123 and 132–133; that span reads TY. 2 residues coordinate AMP: Arg156 and Arg167. An ATP-binding site is contributed by Gly203.

Belongs to the adenylate kinase family. Monomer.

Its subcellular location is the cytoplasm. The catalysed reaction is AMP + ATP = 2 ADP. It functions in the pathway purine metabolism; AMP biosynthesis via salvage pathway; AMP from ADP: step 1/1. Catalyzes the reversible transfer of the terminal phosphate group between ATP and AMP. Plays an important role in cellular energy homeostasis and in adenine nucleotide metabolism. The sequence is that of Adenylate kinase from Thiobacillus denitrificans (strain ATCC 25259 / T1).